A 662-amino-acid polypeptide reads, in one-letter code: Glutathione hydrolase 7 (662 aa).

Topologically, residues 1-106 (MAAENEASQE…AAECSCRQDG (106 aa)) are cytoplasmic. Residues serine 17, serine 72, serine 79, and serine 83 each carry the phosphoserine modification. A disordered region spans residues 26-90 (SFPRLPEDEP…DGSPLRETRK (65 aa)). Residues 72 to 83 (SSSSEMGSQDGS) are compositionally biased toward low complexity. Residues 107–127 (LTVIVTACLTFATGVTVALVM) form a helical; Signal-anchor for type II membrane protein membrane-spanning segment. The Extracellular portion of the chain corresponds to 128 to 662 (QIYFGDPQIF…SPDAAGATIL (535 aa)). Asparagine 198, asparagine 267, asparagine 283, asparagine 330, asparagine 353, asparagine 394, asparagine 519, asparagine 523, and asparagine 586 each carry an N-linked (GlcNAc...) asparagine glycan.

Belongs to the gamma-glutamyltransferase family. Heterodimer composed of the light and heavy chains. The active site is located in the light chain. In terms of processing, cleaved by autocatalysis into a large and a small subunit and the autocatalytic cleavage is essential to the functional activation of the enzyme.

Its subcellular location is the membrane. The catalysed reaction is an N-terminal (5-L-glutamyl)-[peptide] + an alpha-amino acid = 5-L-glutamyl amino acid + an N-terminal L-alpha-aminoacyl-[peptide]. It carries out the reaction glutathione + H2O = L-cysteinylglycine + L-glutamate. It catalyses the reaction an S-substituted glutathione + H2O = an S-substituted L-cysteinylglycine + L-glutamate. The protein operates within sulfur metabolism; glutathione metabolism. Hydrolyzes and transfers gamma-glutamyl moieties from glutathione and other gamma-glutamyl compounds to acceptors. The chain is Glutathione hydrolase 7 from Mus musculus (Mouse).